Reading from the N-terminus, the 345-residue chain is Dihydroorotase (345 aa).

Zn(2+) contacts are provided by H13 and H15. Residues H15–R17 and N41 contribute to the substrate site. 3 residues coordinate Zn(2+): K99, H136, and H174. K99 is modified (N6-carboxylysine). Residue H136 coordinates substrate. L219 is a substrate binding site. Residue D247 participates in Zn(2+) binding. D247 is a catalytic residue. Substrate is bound by residues H251 and A263.

It belongs to the metallo-dependent hydrolases superfamily. DHOase family. Class II DHOase subfamily. In terms of assembly, homodimer. Zn(2+) is required as a cofactor.

The catalysed reaction is (S)-dihydroorotate + H2O = N-carbamoyl-L-aspartate + H(+). It functions in the pathway pyrimidine metabolism; UMP biosynthesis via de novo pathway; (S)-dihydroorotate from bicarbonate: step 3/3. In terms of biological role, catalyzes the reversible cyclization of carbamoyl aspartate to dihydroorotate. This Hahella chejuensis (strain KCTC 2396) protein is Dihydroorotase.